Consider the following 447-residue polypeptide: Probable ribonuclease FAU-1 (447 aa).

The segment at 424-447 is disordered; the sequence is PEAPGGKICTPEGLTSAPPRSSSA.

This sequence belongs to the FAU-1 family.

In terms of biological role, probable RNase involved in rRNA stability through maturation and/or degradation of precursor rRNAs. Binds to RNA in loop regions with AU-rich sequences. The chain is Probable ribonuclease FAU-1 from Pyrobaculum neutrophilum (strain DSM 2338 / JCM 9278 / NBRC 100436 / V24Sta) (Thermoproteus neutrophilus).